Here is a 155-residue protein sequence, read N- to C-terminus: Aspartate carbamoyltransferase regulatory chain (155 aa).

The Zn(2+) site is built by C109, C114, C138, and C141.

The protein belongs to the PyrI family. Contains catalytic and regulatory chains. It depends on Zn(2+) as a cofactor.

Involved in allosteric regulation of aspartate carbamoyltransferase. The sequence is that of Aspartate carbamoyltransferase regulatory chain from Vibrio cholerae serotype O1 (strain ATCC 39315 / El Tor Inaba N16961).